The sequence spans 164 residues: Phosphopantetheine adenylyltransferase (164 aa).

A substrate-binding site is contributed by Ser-9. ATP contacts are provided by residues 9-10 (SF) and His-17. Substrate-binding residues include Lys-41, Leu-73, and Lys-87. Residues 88 to 90 (GLR), Glu-98, and 123 to 129 (HSFLSSS) contribute to the ATP site.

Belongs to the bacterial CoaD family. Homohexamer. Mg(2+) is required as a cofactor.

It is found in the cytoplasm. It carries out the reaction (R)-4'-phosphopantetheine + ATP + H(+) = 3'-dephospho-CoA + diphosphate. Its pathway is cofactor biosynthesis; coenzyme A biosynthesis; CoA from (R)-pantothenate: step 4/5. Functionally, reversibly transfers an adenylyl group from ATP to 4'-phosphopantetheine, yielding dephospho-CoA (dPCoA) and pyrophosphate. The polypeptide is Phosphopantetheine adenylyltransferase (Rubrobacter xylanophilus (strain DSM 9941 / JCM 11954 / NBRC 16129 / PRD-1)).